Here is a 414-residue protein sequence, read N- to C-terminus: Esterase FrsA (414 aa).

This sequence belongs to the FrsA family.

The enzyme catalyses a carboxylic ester + H2O = an alcohol + a carboxylate + H(+). Its function is as follows. Catalyzes the hydrolysis of esters. This chain is Esterase FrsA, found in Enterobacter sp. (strain 638).